A 97-amino-acid polypeptide reads, in one-letter code: UPF0729 protein AAEL015238 (97 aa).

The tract at residues 69–97 (EVAASGSGSNGTATAVGSEGEAEETKKSQ) is disordered. Residues 74-83 (GSGSNGTATA) are compositionally biased toward polar residues.

It belongs to the UPF0729 family.

The polypeptide is UPF0729 protein AAEL015238 (Aedes aegypti (Yellowfever mosquito)).